Here is a 147-residue protein sequence, read N- to C-terminus: Hemoglobin subunit rho (147 aa).

The region spanning 3-147 is the Globin domain; the sequence is HWSAEEKQLI…VAHALAYKYH (145 aa). Heme b-binding residues include His64 and His93.

It belongs to the globin family.

Functionally, the rho chain is the major early embryonic beta-type hemoglobin chain. The chain is Hemoglobin subunit rho from Gallus gallus (Chicken).